Here is a 132-residue protein sequence, read N- to C-terminus: Large ribosomal subunit protein uL14 (132 aa).

This sequence belongs to the universal ribosomal protein uL14 family. Part of the 50S ribosomal subunit. Forms a cluster with proteins L3 and L24e, part of which may contact the 16S rRNA in 2 intersubunit bridges.

Functionally, binds to 23S rRNA. Forms part of two intersubunit bridges in the 70S ribosome. This is Large ribosomal subunit protein uL14 from Methanococcus maripaludis (strain DSM 14266 / JCM 13030 / NBRC 101832 / S2 / LL).